Consider the following 147-residue polypeptide: Flagellar assembly factor FliW (147 aa).

It belongs to the FliW family. Interacts with translational regulator CsrA and flagellin(s).

It localises to the cytoplasm. In terms of biological role, acts as an anti-CsrA protein, binds CsrA and prevents it from repressing translation of its target genes, one of which is flagellin. Binds to flagellin and participates in the assembly of the flagellum. The protein is Flagellar assembly factor FliW of Treponema denticola (strain ATCC 35405 / DSM 14222 / CIP 103919 / JCM 8153 / KCTC 15104).